We begin with the raw amino-acid sequence, 27 residues long: Superoxide dismutase [Mn] (27 aa).

The protein belongs to the iron/manganese superoxide dismutase family. In terms of assembly, homodimer. Mn(2+) serves as cofactor.

The enzyme catalyses 2 superoxide + 2 H(+) = H2O2 + O2. Destroys superoxide anion radicals which are normally produced within the cells and which are toxic to biological systems. The chain is Superoxide dismutase [Mn] (sodA) from Desulfovibrio desulfuricans.